The sequence spans 206 residues: Large ribosomal subunit protein uL4 (206 aa).

Positions 63–94 (MYKQKGTGRARHHSARAPQFRGGGKAHGPVVR) are disordered. Residues 64–77 (YKQKGTGRARHHSA) show a composition bias toward basic residues.

The protein belongs to the universal ribosomal protein uL4 family. As to quaternary structure, part of the 50S ribosomal subunit.

Its function is as follows. One of the primary rRNA binding proteins, this protein initially binds near the 5'-end of the 23S rRNA. It is important during the early stages of 50S assembly. It makes multiple contacts with different domains of the 23S rRNA in the assembled 50S subunit and ribosome. Forms part of the polypeptide exit tunnel. This is Large ribosomal subunit protein uL4 from Mesorhizobium japonicum (strain LMG 29417 / CECT 9101 / MAFF 303099) (Mesorhizobium loti (strain MAFF 303099)).